Reading from the N-terminus, the 404-residue chain is Probable tRNA sulfurtransferase (404 aa).

The region spanning Thr-60–Thr-165 is the THUMP domain. ATP contacts are provided by residues Met-183–Leu-184, His-208–Phe-209, Arg-265, Gly-287, and Gln-296.

Belongs to the ThiI family.

The protein localises to the cytoplasm. The enzyme catalyses [ThiI sulfur-carrier protein]-S-sulfanyl-L-cysteine + a uridine in tRNA + 2 reduced [2Fe-2S]-[ferredoxin] + ATP + H(+) = [ThiI sulfur-carrier protein]-L-cysteine + a 4-thiouridine in tRNA + 2 oxidized [2Fe-2S]-[ferredoxin] + AMP + diphosphate. It catalyses the reaction [ThiS sulfur-carrier protein]-C-terminal Gly-Gly-AMP + S-sulfanyl-L-cysteinyl-[cysteine desulfurase] + AH2 = [ThiS sulfur-carrier protein]-C-terminal-Gly-aminoethanethioate + L-cysteinyl-[cysteine desulfurase] + A + AMP + 2 H(+). Its pathway is cofactor biosynthesis; thiamine diphosphate biosynthesis. Its function is as follows. Catalyzes the ATP-dependent transfer of a sulfur to tRNA to produce 4-thiouridine in position 8 of tRNAs, which functions as a near-UV photosensor. Also catalyzes the transfer of sulfur to the sulfur carrier protein ThiS, forming ThiS-thiocarboxylate. This is a step in the synthesis of thiazole, in the thiamine biosynthesis pathway. The sulfur is donated as persulfide by IscS. The protein is Probable tRNA sulfurtransferase of Streptococcus pneumoniae (strain 70585).